A 5641-amino-acid polypeptide reads, in one-letter code: MYTDKFRFKTGVSSFQILLAWTVLLKDYIGSSGVSFSFSDSTQCHKGTGKIDLELDEHDTIGLLSRRIKEQLLVKSDSNEYLSFKTHLDISSGEPENLNGHLIGSTNGHKKQWENDSADDKRGQHPREIVDWTIKCVLSEDGRGMKTTAIPKLSTASSRQGLRLMYQLEHVLRHIHLSTEGTLVYKIDTATKSDLNDIWKWNFNNPPLSERTVLEIFTENVQRYPTATAVNAWDGDLSYQELDRLSTEFSFHLAYAGVKRGNIVPLFFEKSMWTPVAIWAVIKTGAAFVLLDEVLPESRLQQLGQVIRQEIIVALASSSQESRAKLLGTQVIIIDSYYLETAASVPSEFKTQPQIQPSDLIYIVFTSGTTGVPKAVMIQHSNVSAFARSLRTISDVGPNSRIVALSSYAFDVSLGNLFLSLLSGCCLCIPSSWECRNTVPRVLQDYQITHAQMTPSISKMLRPCQLSTLEVLELSGEQCTEDVLARWQETPIRVMNTYSPAECTITTVGNGNVLTSSKSSIIGKGLGNCCWVLDPIDHDRLSPVGGIGELVLEGPSVGMGYLHDPRATALKFFEDPEWLLKGLPGVSPGRKGRLYRTGDLVRYTEDGSIDFVGRRDTQVKIRGQRVELGEISAHLQQLVHPSIWCSPEVVKVSSGTELLVVFLVVTEDEVGNGTASILRSTLRVTVDLVDSELRSRLPPAMVPGAYACIKDIPLTLTGKTDHRKLREIGLSLAADMLIFPSNKQESYATNGDRQNRGLHTTLNGNGYQEQNGHAHTHAHTNGDTNGHTNGYVNGSHSHTNSRNKTQKYGHVTYDGTEEEYKIQTLKEIWSDEFHVDIESITLSDSFFAHGGESLTAIKMVGVAFEKGIQLDVPTIFRHPQLSDLVSNCKMSATASPDHPKPFSLLEGEIIPVEAVEACGTCLDNIEDVYPCTPLQEGLITASISKSTAYVGQKAFLLPDGINFERLALAWQRVVQTHQILRTRIFDTESHGLLQAVLTDGKVFLGIQKRDLKSYLEDDNDRKMGLGTELCRCAIVRESGCSYFVLTMHHAIYDGWTLPRIGSEVFKAYQGVRVEPNMGFNAFIKHIKSLPSQTANKFWAHQLANPGESAVFPIVPLYIQEPKSDSTVSKRFPVPQNANSGVSMPSLLRSAWALLVSKLSDSNDVTFGATVSGRNVPIYGIKDLLSPTISTVPVRVKIDKDSNIETFIATVQDDSLSAIPFENFGLQNIRKINTDTREGSKFQTLFVVHPPNSTTPDQTLNLSLADHELKDILENLDISSVLSNFNEYGLMVIVTQEQDSLIVQASYDSRVLETDQVILLLDQFAHVAEQIGQPANLACKVQELQFASGKDVETIWTWNSTRVPGLKECIHDVICRTIAVQPHGQAISAWDGNLTFEELNVLSLRLAHILRSKGVGRGSLVPICMEKSKWATIAMLGILRIGAGFIAMDVRHQPRQRLQTIADAVNSKWIVTAGPATELVPDVSEGVIVCDQDLQIETSDFPVPLEPVCSASSDTAFVVFTSGTTGVPKGIVITHENFCSTIQHHAHQLKISKESRIYDYASYSFDIAVHNSLMAMCLGACLCIPSEDERENDIEGSFERLQANWTDITPSVARLVDPTGVPGLKTLVLSGEAVRKDLVERWATKVNLINAYGPAECQICTIQENIIDPQQAAHIGRAVGCTAWIIDPENDSLCPIGAVGELVIEGPIVSPGYLNATRDAFIQDPKWLIEGSASIPGRRGSVYRTGDLCRFRPDGTIIYISRATTQIKINGQRIELEDVEFYVQQAMATPGQVIASVVNFDGVNHLTAFLAPVPTLKTNDKFHGLGKDVEPTVELIPPPIGLQNKLKDALPAYMIPTVFLKISHIPLTTTRKIDRRQLNDCASRISRDDLIALDQEGTGPVKIELSEKQENMARLWAQVLKLNSSKIGLHSDFFRLGGESISAMRLVKYARKEGLVLTVADIFRHSRFDQLVMIATELTSRENTAEYFNGKLQPFALVPMNHRDSLISTAAMACNLPSDDIIDIYACTPFQEGVFALTASNSSAYVQHTELRFSDELNLDQVLDAWVSVIAANPILRTRFIQSEDAKLMQVVVRPQKQAWKWYYSPQEYLSEAENIPFGLGDPLFCFGLVRHGSTSSPGHTLIWTLHHAVYDAWTMDLILRQVSSCYYGEKQAESGPDYSVFVDFLRHQESESANWWKSYLSGSSDASIFPKMPISAAESQIDNTIRKEFAMPNIVPPGYSPAVILRAAWAAAVARYTGDESVLFGETRLGRNVPVSGIDKLLGPTIASVPLLVHIDREQTIGSLLYAIREDGLQMQPFEHLGLQNISHISEDTKAACKFQTLLVFLENAEDVDSSSIFKIDETIDDIRNFNSYYLLVYFTLNQKGLVAQAVFKDSAISSGQVEFLLEQVQSIFSKLCESPLDTPLRSLDLASEQDLAKIWNWNATSAEAVDKFVHELIAEKARQHPNKLAVFAHDGQITYKELDDYSTNLASQLIGRGIGLGCFVPLCFEKSAMVPVCMLAVIKTGAAFYVMDVSYPEGRLKLITETLKASLMLASPSQQWLAKRLAGNILVVDSVCCTDNTYRSSHPVIEDPSRNTNRLMYVCFTSGSTGLPKGVMVTHKNISSAAVAQTQDLDFDPEDRVYDFSSHAFDANIWHFYLGFIVGACVCIPSQEDRIGNLAGSITFFQSTALFLTPSVARTLDPKELPTVKRLYLGGEAVTPLDVSKWVEHLDLWGAYGPTETTPLCIFTRLHSPEFASNIGKGVGVRSWICNPNNNEELMAIGAVGEMVNEGPLVTQGYYEQPEKTAKVFIENPEFLLRGYKEIPGRRGRLYRTGDLVRYAFDGSIEYLGRADTQVKLRGQRVEFGEIEYHLNNALPGTSSICEVIIHPSSRMPMLAAFCTLSSSMDTLNETGARAYLCKRVPPYMVPEFFFTIPEIPKNPSGKVDRLKLRSFGPQVLLERSTSHEEGSVTERVHGPLTEMETTLAELWATAVDHDVTWLGMESEFADVGGDSIAAMKLSNLARRHELSLTVKDIINSSNLAGMAIKIQPIHESFASPQPFSLLPPSRIDQTVARAAMTCGVSIDSITDIYPCTPLQVELFSLTMKQPQAYIKRSVFEVPTSVNFEKLIESWDSVFDINAILRTRFVEVDDLGLLQVVIKGHQRKKYGSLDSFIQACSQERLDFGSPLSHLAVVEDSVALKIAWTIHHALYDEWSTLIIEEQLRQAYRSRCIPRPPDYSEFVRYIRTNNHEEARGFWRNSLAGCISAKIYPELPVGNYQVRPRKAFKRSLQYSARPGVNIQATIHAAWALIVSRLSASDDVVFSTTLAGRNAPVAGIEQMVGPTITPVPIRVKLGNQKQSVQSMLDMIEKDIAKMAPYQHIGTKNIERINDDTRAACKFRTLIVVTPTSYSTTHELQDIKTETYGVNSEEGQAFHTIPLVLFFFPGESGLDLEIVFDPVILHEREIERLTGRLETVLSAFSTANSVSDIQCIGREDLEDVWKWNAILPSSSKKLLHEDILECVQRAPDKVAIEAWDCKITYSQLDQLSENHAVHLNNYNVRKGTVVPILSLKSGLVPVAALAVLRAGGTLLPLDITQPVQRLKMIIDQVKPNVVMAGLSSIGIASQLCENVIVIKSCVDITPCAHGDAVYFETPSPDDVACILFTSGSTGIPKGVKQTHRGLSSAIKHQARESGFNENTRAFEFASYGFDVSWNMIFKVLAVGGTLCVPEEEERQNDLARALNRTAATLTELTPSVARLINPQQLTSLTTLILSGESVDPREFAHWKPQNHHQLMPVGAIGEIIIEGPIVGSGYYNNENLTSASYVHDVPWLRNDHDGNDARTSRVFKSGDLARFDSKGNIHFIARKDLQVKLNGQRIELEEVQHHVRNLMHDFVGPVISCVLGDSKQRSDQKLATFLVNKHGNTQGTCLAVPEEKAVEQLETLDERLREMLPKYMVPSIYYFVTAVPRTNNGKIDMKRLVEVAAMARPDQIYRGRTDRQRVRRIPSTPTEMKMQQLWAAALEVPIAEIGADDTFFNLNGDSISAMKLVAGARSEGFDLRVSDVFETPRLSELATKIAPRITKKQLAVSTIRPFELLGESANIVAIRSEVAAKCGMQDPGAVKDVYPCTPLQESMLAATIRDPRAFISMRVYRIRQGVDLVRLENAWATVVAQHPILRTRLVDLEHHGLTQAIFEESHIIWQTYVDMDSFLRHYEEQKMGPTTTLTRWALIDEADDWKLVWTIHHAIYDGWVLPIVEEEVRKTYFGSEQDKQYLDMKPLVKYILQEEKAKSIDFWARLLAGSEESIVYPPLPSHKYESSPATYLERTISADLSSSRGINLSALLYGSWSVLVSHMTGIPKVSFGAILTGRNAPVDGIDRMIGPAVTTVPILVDANPSFSVRKFMDRLQDMTVQRMPHEHLGVHAIRRINDACEAGCRFQTVLVIQPPGGNGHDTSNIQDSFLMEEVDETTIEGFPDQHSVLNQYGLMIEILPRGKEIKVRASFDSNLISTSQLSKTISRWERIINQISQTLSQGVHTTIQSLDSLSQQDIEEIWTWNKELPDVVDDRFVFEIIQEIAGRHPDALAIDAWDGQLTYRDLESLSTRVSELLVSFGVGPGSFVPLLFHKSMWTNVSMLGVLKVGAAFVPLDFSHPEGHLRAVMQPLNADIILCADNTRDRAARLSRRAIIVDERSLNADHGNNLATDIPNASVSHTGNAALHIDDLAYAVFTSGSTGAAKGVKVSHKNLVTAIHHHCKPERFQIGLNTRSLDSSSYSFDACIFNFFYTVTQGGCLCVPNDEALKGDIGAFMRQYKVNWAQLVPSVARTLNPKVLPDLKDLILTGEPLTRTDIETWCHNVRLFNVYGPTECTILCSISSPIKGSSHFGYIGRGQGANIWLTEIGNPDKLVPIGVPGEILIEGPIIGAGYLGPYQYPLVEDPPWLLAGTGHISGRQGKLFRTGDQALYTDDGTLVFIGRIGTDIKLRGQRVDIVAVEDIIRRHVPSGLEIAVGIARITVGGKVLAREMLLCFASQNQTFRDNGASPQNKLNDILRALVADIIPELDAAMPKYLHPEAFVALSSMPKTSSGKTDRRCLKEAEKQLRLHDLIWISTEMAESTNTPPSTQEEKVIAALWAEVIGIEHESISREDDFFKLGGDSLGVMRLTTKAHRLGLVLKSNDVFRNSKLASLAEKISWESIGPSEIAPYKPYSLVPEISDIDAFTANHIVPSLNIEANQVEDILPANGFQVDYIHNKEEPLGLRYAYLDIGPDVQWQRLIQACRTMLQGYECFRARFILYKGRYYQIILRDAPFIIEEISATQQIAIFSQQLCRADLHAASLSDVFSKMTLVNVGINRRRVILRLSHMQHDGWCTTQLLNAVAAAFNSLEIEKTPKWTSVLHYRHLMVEESCRYWRTKLQGATQITPSLVYKPGGSKVRTLRSYALSNFHASDDNRRTRPTVVVNVAWALILEQLAGHQDVVFGNVTTGRNGNMPGLDSVVGPCVNMLPMRLQLQSHSTTNREHKLRDLVEASAQQVDDGAFHNGLDWDELIDKCTTCVSGSRYKSAVHFRNMEFEPELSLGGDRVVVQWYELVETPRWTTVLVYPEENVLRLWLLADPAQIGDDGADEILHMLAGYCEEIVQSLQT.

The disordered stretch occupies residues 95–124 (PENLNGHLIGSTNGHKKQWENDSADDKRGQ). Basic and acidic residues predominate over residues 111 to 124 (KQWENDSADDKRGQ). The tract at residues 217–622 (FTENVQRYPT…GRRDTQVKIR (406 aa)) is adenylation (A) domain 1. One can recognise a Carrier 1 domain in the interval 816-892 (TEEEYKIQTL…DLVSNCKMSA (77 aa)). Residues 821–889 (KIQTLKEIWS…QLSDLVSNCK (69 aa)) form a thiolation (T) domain 1 region. An O-(pantetheine 4'-phosphoryl)serine modification is found at Ser-853. The segment at 926–1333 (EDVYPCTPLQ…AHVAEQIGQP (408 aa)) is condensation (C) domain 1. Positions 1390–1768 (DGNLTFEELN…ISRATTQIKI (379 aa)) are adenylation (A) domain 2. The region spanning 1902–1978 (IELSEKQENM…QLVMIATELT (77 aa)) is the Carrier 2 domain. The segment at 1907-1975 (KQENMARLWA…RFDQLVMIAT (69 aa)) is thiolation (T) domain 2. Position 1939 is an O-(pantetheine 4'-phosphoryl)serine (Ser-1939). The interval 2022–2438 (DIYACTPFQE…DLASEQDLAK (417 aa)) is condensation (C) domain 2. Residues 2459–2859 (AEKARQHPNK…GRADTQVKLR (401 aa)) form an adenylation (A) domain 3 region. One can recognise a Carrier 3 domain in the interval 2976-3052 (GPLTEMETTL…GMAIKIQPIH (77 aa)). The segment at 2977 to 3049 (PLTEMETTLA…NLAGMAIKIQ (73 aa)) is thiolation (T) domain 3. An O-(pantetheine 4'-phosphoryl)serine modification is found at Ser-3013. Positions 3089-3482 (DIYPCTPLQV…LETVLSAFST (394 aa)) are condensation (C) domain 3. Positions 3523–3873 (VQRAPDKVAI…IARKDLQVKL (351 aa)) are adenylation (A) domain 4. The Carrier 4 domain occupies 4005–4081 (IPSTPTEMKM…ELATKIAPRI (77 aa)). The segment at 4010–4078 (TEMKMQQLWA…RLSELATKIA (69 aa)) is thiolation (T) domain 4. Ser-4042 is modified (O-(pantetheine 4'-phosphoryl)serine). Residues 4123–4549 (KDVYPCTPLQ…QSLDSLSQQD (427 aa)) form a condensation (C) domain 4 region. Positions 4574–4982 (QEIAGRHPDA…GRIGTDIKLR (409 aa)) are adenylation (A) domain 5. A Carrier 5 domain is found at 5118 to 5194 (PPSTQEEKVI…SLAEKISWES (77 aa)). The interval 5123–5191 (EEKVIAALWA…KLASLAEKIS (69 aa)) is thiolation (T) domain 5. Ser-5155 carries the post-translational modification O-(pantetheine 4'-phosphoryl)serine. The tract at residues 5260–5556 (AYLDIGPDVQ…DKCTTCVSGS (297 aa)) is condensation (C) domain 5.

The protein belongs to the NRP synthetase family.

It functions in the pathway mycotoxin biosynthesis. Nonribosomal peptide synthetase; part of the gene cluster that mediates the biosynthesis of the mycotoxin cyclochlorotine, a hepatotoxic and carcinogenic cyclic chlorinated pentapeptide. Within the pathway, The NRPS cctN initially catalyzes the condensation of L-serine (Ser), Pro, L-2-aminobutyrate (2Abu), Ser, and beta-Phe in this order. During the chain elongation, side-chain hydroxy group of Ser4 would be used as a nucleophile, giving isocyclotine as a product of terminal condensation-like (CT) domain-catalyzed cyclization. After the dichlorination of Pro2 catalyzed by cctP2 to produce isocyclochlorotine, the cctO-mediated transacylation of isocyclochlorotine can furnish cyclochlorotine. The subsequent hydroxylation of cyclochlorotine by cctR yields hydroxycyclochlorotine as the final product. CctP1 probably acts as a phenylalanine aminomutase and provides the uncommon building block beta-Phe. Furthermore, 2Abu can be synthesized from threonine by one of the threonine dehydratases and transaminases localized outside of the cluster. The functions of the remaining proteins encoded by the cluster, cctM and cctT, have not been identified yet. The sequence is that of Cyclochlorotine synthetase from Talaromyces islandicus (Penicillium islandicum).